Consider the following 131-residue polypeptide: Small ribosomal subunit protein uS8 (131 aa).

It belongs to the universal ribosomal protein uS8 family. In terms of assembly, part of the 30S ribosomal subunit. Contacts proteins S5 and S12.

Its function is as follows. One of the primary rRNA binding proteins, it binds directly to 16S rRNA central domain where it helps coordinate assembly of the platform of the 30S subunit. In Bordetella parapertussis (strain 12822 / ATCC BAA-587 / NCTC 13253), this protein is Small ribosomal subunit protein uS8.